The chain runs to 333 residues: Ornithine carbamoyltransferase (333 aa).

Residues 56–59 (STRT), Gln83, Arg107, and 134–137 (HPTQ) contribute to the carbamoyl phosphate site. Residues Asn167, Asp231, and 235 to 236 (SM) each bind L-ornithine. Residues 273 to 274 (CL) and Arg318 each bind carbamoyl phosphate.

It belongs to the aspartate/ornithine carbamoyltransferase superfamily. OTCase family.

It localises to the cytoplasm. The enzyme catalyses carbamoyl phosphate + L-ornithine = L-citrulline + phosphate + H(+). It functions in the pathway amino-acid biosynthesis; L-arginine biosynthesis; L-arginine from L-ornithine and carbamoyl phosphate: step 1/3. Its function is as follows. Has vitronectin and fibronectin-binding activity. In terms of biological role, reversibly catalyzes the transfer of the carbamoyl group from carbamoyl phosphate (CP) to the N(epsilon) atom of ornithine (ORN) to produce L-citrulline. The sequence is that of Ornithine carbamoyltransferase (argF) from Staphylococcus epidermidis (strain ATCC 12228 / FDA PCI 1200).